Here is a 488-residue protein sequence, read N- to C-terminus: MFARPAIRMRCATGLLAIGTLLMLAGCGEEPKPSVLEQVKAEGELRVVTRNSPATYFQDRNGATGFEYELAKRFATDLGLELKIETADNLDSLFASLGHVDGPVLAAAGLVETPQRQRQARFSVPYLEVTPQIIYRQGETRPTKAEDLLGKRILVLAGSSHAEQLEALKLELPELTFEVSDAVEVVDLLRMVDEGQIDLTLVDSNELAMNQVYFPNVRVAFDLGDTNTMRWAVAPGEDDSLLLEIDAFLERSQANGTLQRLKERYYGHVDVLGYVGAYTFAQHLQQRLPRYEKMFRQAGHANQIDWRLLAAMGYQESLWQPNATSKTGVRGLMMLTQRTAQSVGVSNRLDPKQSIDGGARYFVQIHQQLPESIQEPDRTWFALAAYNVGGGHLEDARKLTEAEGLDPNKWMDVQKILPRLAQKQWYSKTRYGYARGGEPVHFVRNVRRYYDILTWVTQPQLEGTQVAENGIHLPGIDKRTLDEQTPPL.

The signal sequence occupies residues 1 to 25 (MFARPAIRMRCATGLLAIGTLLMLA). A non-LT domain region spans residues 26-269 (GCGEEPKPSV…RLKERYYGHV (244 aa)). The interval 270 to 488 (DVLGYVGAYT…RTLDEQTPPL (219 aa)) is LT domain. Glu316 is a catalytic residue.

The protein in the N-terminal section; belongs to the bacterial solute-binding protein 3 family. In the C-terminal section; belongs to the transglycosylase Slt family.

It is found in the cell outer membrane. The catalysed reaction is Exolytic cleavage of the (1-&gt;4)-beta-glycosidic linkage between N-acetylmuramic acid (MurNAc) and N-acetylglucosamine (GlcNAc) residues in peptidoglycan, from either the reducing or the non-reducing ends of the peptidoglycan chains, with concomitant formation of a 1,6-anhydrobond in the MurNAc residue.. Functionally, murein-degrading enzyme that degrades murein glycan strands and insoluble, high-molecular weight murein sacculi, with the concomitant formation of a 1,6-anhydromuramoyl product. Lytic transglycosylases (LTs) play an integral role in the metabolism of the peptidoglycan (PG) sacculus. Their lytic action creates space within the PG sacculus to allow for its expansion as well as for the insertion of various structures such as secretion systems and flagella. The chain is Membrane-bound lytic murein transglycosylase F from Ectopseudomonas mendocina (strain ymp) (Pseudomonas mendocina).